A 219-amino-acid polypeptide reads, in one-letter code: Dehydration-responsive element-binding protein 1E (219 aa).

Positions 1–19 (MEWAYYGSGYSSSGTPSPV) are enriched in low complexity. Residues 1 to 44 (MEWAYYGSGYSSSGTPSPVGGDGDEDSYMTVSSAPPKRRAGRTK) are disordered. Positions 52–109 (VYKGVRSRNPGRWVCEVREPHGKQRIWLGTFETAEMAARAHDVAAMALRGRAACLNFA) form a DNA-binding region, AP2/ERF.

It belongs to the AP2/ERF transcription factor family. ERF subfamily.

It is found in the nucleus. Its function is as follows. Transcriptional activator that binds specifically to the DNA sequence 5'-[AG]CCGAC-3'. Binding to the C-repeat/DRE element mediates high salinity- and dehydration-inducible transcription. The polypeptide is Dehydration-responsive element-binding protein 1E (DREB1E) (Oryza sativa subsp. indica (Rice)).